Consider the following 124-residue polypeptide: Fluoride-specific ion channel FluC (124 aa).

The next 3 helical transmembrane spans lie at 20-40, 60-80, and 102-122; these read LLSI…TLLV, ISPE…TTFS, and VLLN…LIFS. Gly-74 and Thr-77 together coordinate Na(+).

The protein belongs to the fluoride channel Fluc/FEX (TC 1.A.43) family.

The protein resides in the cell inner membrane. The enzyme catalyses fluoride(in) = fluoride(out). Na(+) is not transported, but it plays an essential structural role and its presence is essential for fluoride channel function. Its function is as follows. Fluoride-specific ion channel. Important for reducing fluoride concentration in the cell, thus reducing its toxicity. The protein is Fluoride-specific ion channel FluC of Shewanella frigidimarina (strain NCIMB 400).